The chain runs to 630 residues: Pentatricopeptide repeat-containing protein At1g26460, mitochondrial (630 aa).

Residues 1–115 (MASHLFTRSR…RALSETLDMN (115 aa)) constitute a mitochondrion transit peptide. The segment at 42 to 79 (LLATESTDHDPSNHQSTSTPLPPNPATGSPLYQENWRS) is disordered. The span at 67 to 77 (ATGSPLYQENW) shows a compositional bias: polar residues. PPR repeat units lie at residues 154–189 (DVNL…SVEP), 190–224 (NTAS…GKDS), 227–261 (DDES…GYML), 468–503 (SVAA…GLTP), 504–538 (NIDS…GVKP), and 539–573 (DSRT…GFEP).

This sequence belongs to the PPR family. P subfamily.

It is found in the mitochondrion. The sequence is that of Pentatricopeptide repeat-containing protein At1g26460, mitochondrial from Arabidopsis thaliana (Mouse-ear cress).